We begin with the raw amino-acid sequence, 476 residues long: Scopoletin glucosyltransferase (476 aa).

Catalysis depends on H16, which acts as the Proton acceptor. H16 serves as a coordination point for an anthocyanidin. D119 acts as the Charge relay in catalysis. A343, Q345, H360, W363, N364, S365, and E368 together coordinate UDP-alpha-D-glucose. A383 provides a ligand contact to an anthocyanidin. UDP-alpha-D-glucose-binding residues include E384 and Q385.

The protein belongs to the UDP-glycosyltransferase family.

It carries out the reaction scopoletin + UDP-alpha-D-glucose = scopolin + UDP + H(+). Its function is as follows. Glucosyltransferase acting preferentially on aromatic substrates of the phenylpropanoid types. The best substrates are scopoletin and esculetin. Required for full resistance to virus. The polypeptide is Scopoletin glucosyltransferase (TOGT1) (Nicotiana tabacum (Common tobacco)).